A 512-amino-acid chain; its full sequence is 2,3-bisphosphoglycerate-independent phosphoglycerate mutase (512 aa).

Residues aspartate 12 and serine 62 each coordinate Mn(2+). Serine 62 (phosphoserine intermediate) is an active-site residue. Residues histidine 123, 153-154, arginine 185, arginine 191, 260-263, and lysine 333 contribute to the substrate site; these read RD and RPDR. Mn(2+) contacts are provided by aspartate 400, histidine 404, aspartate 441, histidine 442, and histidine 460.

It belongs to the BPG-independent phosphoglycerate mutase family. As to quaternary structure, monomer. Mn(2+) is required as a cofactor.

The catalysed reaction is (2R)-2-phosphoglycerate = (2R)-3-phosphoglycerate. It functions in the pathway carbohydrate degradation; glycolysis; pyruvate from D-glyceraldehyde 3-phosphate: step 3/5. Its function is as follows. Catalyzes the interconversion of 2-phosphoglycerate and 3-phosphoglycerate. The polypeptide is 2,3-bisphosphoglycerate-independent phosphoglycerate mutase (Clostridium perfringens (strain 13 / Type A)).